The chain runs to 1117 residues: Centrosomal protein of 126 kDa (1117 aa).

Residues 1–42 (MLAGRPGTRSAVGELGTESSDNLDRAPLGPRESGGHHRPGSY) are disordered. Residues 49 to 121 (LEKNLEEERQ…EEVTEKFQRA (73 aa)) adopt a coiled-coil conformation. 2 disordered regions span residues 643–664 (AENSHSLKNKTGTTQQHSQQFH) and 730–759 (KKEESKIPVHDDSKTKQGKPQRGRAKIIRK). Residues 730 to 744 (KKEESKIPVHDDSKT) show a composition bias toward basic and acidic residues. Residues 745-758 (KQGKPQRGRAKIIR) show a composition bias toward basic residues.

Interacts with DCTN1. Expressed in brain, lung, skeletal muscle, kidney, pancreas, testis and ovary.

Its subcellular location is the midbody. It localises to the cytoplasm. It is found in the cytoskeleton. The protein resides in the microtubule organizing center. The protein localises to the centrosome. Its subcellular location is the cilium basal body. Functionally, participates in cytokinesis. Necessary for microtubules and mitotic spindle organization. Involved in primary cilium formation. The sequence is that of Centrosomal protein of 126 kDa from Homo sapiens (Human).